The following is a 450-amino-acid chain: Phosphoglucosamine mutase (450 aa).

The active-site Phosphoserine intermediate is the Ser101. Residues Ser101, Asp242, Asp244, and Asp246 each contribute to the Mg(2+) site. Ser101 carries the post-translational modification Phosphoserine.

It belongs to the phosphohexose mutase family. It depends on Mg(2+) as a cofactor. Activated by phosphorylation.

The catalysed reaction is alpha-D-glucosamine 1-phosphate = D-glucosamine 6-phosphate. In terms of biological role, catalyzes the conversion of glucosamine-6-phosphate to glucosamine-1-phosphate. The chain is Phosphoglucosamine mutase from Rhodopseudomonas palustris (strain ATCC BAA-98 / CGA009).